A 458-amino-acid polypeptide reads, in one-letter code: UDP-N-acetylmuramoylalanine--D-glutamate ligase (458 aa).

Gly118–Thr124 serves as a coordination point for ATP.

It belongs to the MurCDEF family.

Its subcellular location is the cytoplasm. The catalysed reaction is UDP-N-acetyl-alpha-D-muramoyl-L-alanine + D-glutamate + ATP = UDP-N-acetyl-alpha-D-muramoyl-L-alanyl-D-glutamate + ADP + phosphate + H(+). It functions in the pathway cell wall biogenesis; peptidoglycan biosynthesis. Functionally, cell wall formation. Catalyzes the addition of glutamate to the nucleotide precursor UDP-N-acetylmuramoyl-L-alanine (UMA). The sequence is that of UDP-N-acetylmuramoylalanine--D-glutamate ligase from Ligilactobacillus salivarius (strain UCC118) (Lactobacillus salivarius).